A 556-amino-acid chain; its full sequence is 2-succinyl-5-enolpyruvyl-6-hydroxy-3-cyclohexene-1-carboxylate synthase (556 aa).

The protein belongs to the TPP enzyme family. MenD subfamily. In terms of assembly, homodimer. The cofactor is Mg(2+). Mn(2+) serves as cofactor. Requires thiamine diphosphate as cofactor.

The catalysed reaction is isochorismate + 2-oxoglutarate + H(+) = 5-enolpyruvoyl-6-hydroxy-2-succinyl-cyclohex-3-ene-1-carboxylate + CO2. It participates in quinol/quinone metabolism; 1,4-dihydroxy-2-naphthoate biosynthesis; 1,4-dihydroxy-2-naphthoate from chorismate: step 2/7. Its pathway is quinol/quinone metabolism; menaquinone biosynthesis. Functionally, catalyzes the thiamine diphosphate-dependent decarboxylation of 2-oxoglutarate and the subsequent addition of the resulting succinic semialdehyde-thiamine pyrophosphate anion to isochorismate to yield 2-succinyl-5-enolpyruvyl-6-hydroxy-3-cyclohexene-1-carboxylate (SEPHCHC). The sequence is that of 2-succinyl-5-enolpyruvyl-6-hydroxy-3-cyclohexene-1-carboxylate synthase from Escherichia coli O17:K52:H18 (strain UMN026 / ExPEC).